Reading from the N-terminus, the 1330-residue chain is Pre-mRNA-splicing factor CWC22 homolog (1330 aa).

Positions methionine 1–lysine 377 are disordered. Over residues aspartate 9–serine 36 the composition is skewed to low complexity. The span at glutamine 46–histidine 94 shows a compositional bias: basic and acidic residues. Over residues alanine 99–glutamate 113 the composition is skewed to low complexity. Residues glutamate 115–alanine 135 are compositionally biased toward basic and acidic residues. Positions serine 138–lysine 148 are enriched in polar residues. The span at alanine 149 to glutamate 166 shows a compositional bias: basic and acidic residues. The span at proline 168–glutamate 177 shows a compositional bias: polar residues. 2 positions are modified to phosphothreonine: threonine 191 and threonine 201. 2 stretches are compositionally biased toward basic and acidic residues: residues threonine 191 to threonine 201 and leucine 208 to glycine 236. Residues serine 219 and serine 221 each carry the phosphoserine modification. The segment covering serine 252–serine 277 has biased composition (basic residues). Composition is skewed to basic and acidic residues over residues asparagine 278–lysine 307 and serine 316–glutamate 325. The span at threonine 355 to glutamate 366 shows a compositional bias: low complexity. Positions lysine 420–glycine 603 constitute an MIF4G domain. The disordered stretch occupies residues arginine 660–alanine 697. A compositionally biased stretch (low complexity) spans serine 665–aspartate 678. Over residues serine 679 to serine 689 the composition is skewed to acidic residues. One can recognise an MI domain in the interval alanine 710–leucine 826. Residues phenylalanine 926–serine 1330 form a disordered region. Over residues serine 941–aspartate 951 the composition is skewed to low complexity. Residues threonine 952–serine 963 show a composition bias toward acidic residues. Positions serine 964–serine 976 are enriched in low complexity. Residues lysine 980–lysine 1012 show a composition bias toward basic residues. Residues alanine 1013–lysine 1033 are compositionally biased toward basic and acidic residues. The segment covering aspartate 1034–lysine 1054 has biased composition (basic residues). Over residues serine 1072–serine 1082 the composition is skewed to low complexity. The span at proline 1089–aspartate 1110 shows a compositional bias: basic and acidic residues. At threonine 1108 the chain carries Phosphothreonine. A phosphoserine mark is found at serine 1111, serine 1121, serine 1180, and serine 1181. Basic and acidic residues-rich tracts occupy residues arginine 1133–aspartate 1195 and serine 1203–glutamate 1320. Phosphotyrosine is present on tyrosine 1182. The segment covering arginine 1321–serine 1330 has biased composition (basic residues).

Belongs to the CWC22 family. In terms of assembly, component of the spliceosome C complex. Interacts with eIF4AIII.

It localises to the nucleus speckle. In terms of biological role, required for pre-mRNA splicing and for exon-junction complex (EJC) assembly. Hinders eIF4AIII from non-specifically binding RNA and escorts it to the splicing machinery to promote EJC assembly on mature mRNAs. The polypeptide is Pre-mRNA-splicing factor CWC22 homolog (ncm) (Drosophila melanogaster (Fruit fly)).